Consider the following 268-residue polypeptide: MAVNVYSTSVTSDNLSRHDMLAWINESLQLNLTKIEQLCSGAAYCQFMDMLFPGSIALKKVKFQAKLEHEYIQNFKILQAGFKRMGVDKIIPVDKLVKGKFQDNFEFVQWFKKFFDANYDGKDYDPVAARQGQETAVAPSLVAPALNKPKKPLSSSSAAPQRPISTQRTAAAPKAGPGVVRKNPGVGNGDDEAAELMQQVNVLKLTVEDLEKERDFYFGKLRNIELICQENEGENDPVLQRIVDILYATDEGFVIPDEGGPQEEQEEY.

Ala-2 bears the N-acetylalanine mark. Residues 14–116 enclose the Calponin-homology (CH) domain; it reads NLSRHDMLAW…FVQWFKKFFD (103 aa). Residue Lys-66 is modified to N6-crotonyllysine. Tyr-124 bears the Phosphotyrosine mark. The interaction with MTUS2/TIP150 stretch occupies residues 124–268; that stretch reads YDPVAARQGQ…GGPQEEQEEY (145 aa). Positions 146 to 160 are enriched in low complexity; it reads LNKPKKPLSSSSAAP. A disordered region spans residues 146–191; it reads LNKPKKPLSSSSAAPQRPISTQRTAAAPKAGPGVVRKNPGVGNGDD. Ser-155 and Ser-165 each carry phosphoserine. The EB1 C-terminal domain maps to 185-255; that stretch reads GVGNGDDEAA…LYATDEGFVI (71 aa). The tract at residues 185–268 is interaction with CDK5RAP2; that stretch reads GVGNGDDEAA…GGPQEEQEEY (84 aa). The tract at residues 206–211 is interaction with APC; sequence TVEDLE. The interval 208 to 268 is DCTN1-binding; the sequence is EDLEKERDFY…GGPQEEQEEY (61 aa). The residue at position 220 (Lys-220) is an N6-acetyllysine. The interval 220–242 is APC-binding; it reads KLRNIELICQENEGENDPVLQRI. An interaction with SKA1 region spans residues 232-255; the sequence is EGENDPVLQRIVDILYATDEGFVI.

This sequence belongs to the MAPRE family. Homodimer. Heterodimer with MAPRE3. Interacts with DCTN1, DCTN2, TERF1 and dynein intermediate chain. Interaction with DIAPH1 and DIAPH2. Interacts (via C-terminal residues 206-211) with APC (via C-terminal residues 2674-2845); the interaction inhibits association with and bundling of F-actin. Interacts with CLASP2, DST, KIF2C and STIM1; probably required for their targeting to the growing microtubule plus ends. Interacts with MTUS2; interaction is direct and probably targets MTUS2 to microtubules. Interacts (via C-terminus) with SKA1 (via SXIP motif); the interaction is direct and stabilizes the kinetochore-microtubule attachment of the SKA1 complex. Interacts with APC2. Interacts with CLASP1. Interacts with CDK5RAP2. Interacts with MACF1. Interacts with RABL2/RABL2A; binds preferentially to GTP-bound RABL2. Interacts with KCNAB2. Interacts (via C-terminus) with CLIP1. Interacts with SLAIN2 and SLAIN1. Interacts with KIF18B; this interaction is required for efficient accumulation of KIF18B at microtubule plus ends. Interacts with MISP. Interacts with KNSTRN. Interacts with NCKAP5L. Interacts with CAMSAP2. Interacts with PDE4DIP isoform 13/MMG8/SMYLE; this interaction is required for its recruitment to the Golgi apparatus. Forms a pericentrosomal complex with AKAP9, CDK5RAP2 and PDE4DIP isoform 13/MMG8/SMYLE; within this complex, MAPRE1 binding to CDK5RAP2 may be mediated by PDE4DIP. Interacts with AKNA. Interacts with GAS2L1, GAS2L2, and GAS2L3. Interacts with RARRES1 and AGBL2. Post-translationally, acetylation at Lys-220 by KAT2B/PCAF promotes dynamic kinetochore-microtubule interactions in early mitosis. In terms of processing, crotonylated by KAT5 during mitosis, promoting astral microtubule plasticity and dynamic connection between astral microtubules and the cortex during mitotic chromosome segregation, thereby ensuring accurate spindle positioning in mitosis. Decrotonylated by HDAC3.

The protein resides in the cytoplasm. Its subcellular location is the cytoskeleton. It is found in the microtubule organizing center. It localises to the centrosome. The protein localises to the golgi apparatus. The protein resides in the spindle. Its subcellular location is the spindle pole. Plus-end tracking protein (+TIP) that binds to the plus-end of microtubules and regulates the dynamics of the microtubule cytoskeleton. Recruits other +TIP proteins to microtubules by binding to a conserved Ser-X-Leu-Pro (SXLP) motif in their polypeptide chains. Promotes cytoplasmic microtubule nucleation and elongation. Involved in mitotic spindle positioning by stabilizing microtubules and promoting dynamic connection between astral microtubules and the cortex during mitotic chromosome segregation. Assists chromosome alignment in metaphase by recruiting the SKA complex to the spindle and stabilizing its interactions with microtubule bundles (K-fibers). Also acts as a regulator of minus-end microtubule organization: interacts with the complex formed by AKAP9 and PDE4DIP, leading to recruit CAMSAP2 to the Golgi apparatus, thereby tethering non-centrosomal minus-end microtubules to the Golgi, an important step for polarized cell movement. Promotes elongation of CAMSAP2-decorated microtubule stretches on the minus-end of microtubules. Acts as a regulator of autophagosome transport via interaction with CAMSAP2. Functions downstream of Rho GTPases and DIAPH1 in stable microtubule formation. May play a role in cell migration. In Pongo abelii (Sumatran orangutan), this protein is Microtubule-associated protein RP/EB family member 1 (MAPRE1).